The chain runs to 366 residues: Holliday junction branch migration complex subunit RuvB (366 aa).

Positions 1–49 (MAIISSKKQPPEPNGQPNKRPESAPAAPKEKVLQPEAAIDEQGKQEESI) are disordered. Positions 13-210 (PNGQPNKRPE…FGLIQKLRFY (198 aa)) are large ATPase domain (RuvB-L). Residues Ile-49, Arg-50, Gly-91, Lys-94, Thr-95, Thr-96, 157-159 (EDY), Arg-200, Tyr-210, and Arg-247 each bind ATP. Thr-95 is a binding site for Mg(2+). The small ATPAse domain (RuvB-S) stretch occupies residues 211–281 (EVDELSQIVL…IAAEALQLFQ (71 aa)). The segment at 284 to 366 (PCGLDWTDRR…TPPNEQLSLL (83 aa)) is head domain (RuvB-H). DNA contacts are provided by Arg-339 and Arg-344.

It belongs to the RuvB family. As to quaternary structure, homohexamer. Forms an RuvA(8)-RuvB(12)-Holliday junction (HJ) complex. HJ DNA is sandwiched between 2 RuvA tetramers; dsDNA enters through RuvA and exits via RuvB. An RuvB hexamer assembles on each DNA strand where it exits the tetramer. Each RuvB hexamer is contacted by two RuvA subunits (via domain III) on 2 adjacent RuvB subunits; this complex drives branch migration. In the full resolvosome a probable DNA-RuvA(4)-RuvB(12)-RuvC(2) complex forms which resolves the HJ.

It is found in the cytoplasm. It carries out the reaction ATP + H2O = ADP + phosphate + H(+). Its function is as follows. The RuvA-RuvB-RuvC complex processes Holliday junction (HJ) DNA during genetic recombination and DNA repair, while the RuvA-RuvB complex plays an important role in the rescue of blocked DNA replication forks via replication fork reversal (RFR). RuvA specifically binds to HJ cruciform DNA, conferring on it an open structure. The RuvB hexamer acts as an ATP-dependent pump, pulling dsDNA into and through the RuvAB complex. RuvB forms 2 homohexamers on either side of HJ DNA bound by 1 or 2 RuvA tetramers; 4 subunits per hexamer contact DNA at a time. Coordinated motions by a converter formed by DNA-disengaged RuvB subunits stimulates ATP hydrolysis and nucleotide exchange. Immobilization of the converter enables RuvB to convert the ATP-contained energy into a lever motion, pulling 2 nucleotides of DNA out of the RuvA tetramer per ATP hydrolyzed, thus driving DNA branch migration. The RuvB motors rotate together with the DNA substrate, which together with the progressing nucleotide cycle form the mechanistic basis for DNA recombination by continuous HJ branch migration. Branch migration allows RuvC to scan DNA until it finds its consensus sequence, where it cleaves and resolves cruciform DNA. This is Holliday junction branch migration complex subunit RuvB from Trichormus variabilis (strain ATCC 29413 / PCC 7937) (Anabaena variabilis).